We begin with the raw amino-acid sequence, 185 residues long: TATA-box-binding protein (185 aa).

Tandem repeats lie at residues 3–78 and 94–176.

It belongs to the TBP family.

General factor that plays a role in the activation of archaeal genes transcribed by RNA polymerase. Binds specifically to the TATA box promoter element which lies close to the position of transcription initiation. The chain is TATA-box-binding protein from Methanopyrus kandleri (strain AV19 / DSM 6324 / JCM 9639 / NBRC 100938).